The chain runs to 260 residues: Uroplakin-1b (260 aa).

The Cytoplasmic segment spans residues 1 to 15; that stretch reads MAKDNSTVRCFQGLL. The chain crosses the membrane as a helical span at residues 16–36; that stretch reads IFGNVIIGCCGIALTAECIFF. Topologically, residues 37-60 are extracellular; it reads VSDQHSLYPLLEATDNDDIYGAAW. The chain crosses the membrane as a helical span at residues 61-81; it reads IGIFVGICLFCLSVLGIVGIM. The Cytoplasmic portion of the chain corresponds to 82–86; sequence KSSRK. The chain crosses the membrane as a helical span at residues 87–107; sequence ILLAYFILMFIVYAFEVASCI. Residues 108–229 are Extracellular-facing; the sequence is TAATQQDFFT…ELISGPMNRH (122 aa). A helical membrane pass occupies residues 230–250; it reads AWGVAWFGFAILCWTFWVLLG. Over 251-260 the chain is Cytoplasmic; sequence TMFYWSRIEY.

The protein belongs to the tetraspanin (TM4SF) family. As to quaternary structure, heterodimer with uroplakin-3A (UPK3A) or uroplakin-3B (UPK3B). N-glycosylated with high-mannose oligosaccharides. In terms of tissue distribution, bladder epithelium.

It is found in the membrane. Component of the asymmetric unit membrane (AUM); a highly specialized biomembrane elaborated by terminally differentiated urothelial cells. May play an important role in normal bladder epithelial physiology, possibly in regulating membrane permeability of superficial umbrella cells or in stabilizing the apical membrane through AUM/cytoskeletal interactions. The polypeptide is Uroplakin-1b (UPK1B) (Homo sapiens (Human)).